A 630-amino-acid chain; its full sequence is Chaperone protein HtpG (630 aa).

The segment at 1–338 (MTVEANKETL…SNDLSLNVSR (338 aa)) is a; substrate-binding. Residues 339-555 (EILQNDSTVE…QFDMGAQMKK (217 aa)) are b. Positions 556–630 (IMEAAGQKVP…LNRLLLELAN (75 aa)) are c.

Belongs to the heat shock protein 90 family. As to quaternary structure, homodimer.

The protein localises to the cytoplasm. Molecular chaperone. Has ATPase activity. The sequence is that of Chaperone protein HtpG from Marinobacter nauticus (strain ATCC 700491 / DSM 11845 / VT8) (Marinobacter aquaeolei).